A 773-amino-acid chain; its full sequence is Cytochrome c oxidase subunit 1+2 (773 aa).

Residues 1-491 (MKLLEIYDKQ…LIASYGSLIT (491 aa)) form a COX1 region. A helical transmembrane segment spans residues 41–61 (TMYITFSIFAGIIGTLLSLVI). E64 contributes to the Ca(2+) binding site. Position 85 (H85) interacts with Fe(II)-heme a. 6 helical membrane-spanning segments follow: residues 87–111 (LIMI…NWFL), 130–150 (LWLI…GIGA), 173–193 (VGIL…INFL), 211–231 (LFVW…PVLA), 262–278 (LFHP…FGII), and 290–310 (IFGV…GFLV). H264 is a Cu cation binding site. The 1'-histidyl-3'-tyrosine (His-Tyr) cross-link spans 264–268 (HPEVY). Residue Y268 coordinates O2. H314 and H315 together coordinate Cu cation. Transmembrane regions (helical) follow at residues 335 to 355 (IIAI…WGGV) and 362 to 382 (MLFV…GVVL). Mg(2+) contacts are provided by H392 and D393. The next 5 membrane-spanning stretches (helical) occupy residues 396–416 (YVVA…IFAG), 444–464 (FWTM…LGLA), 483–503 (IASY…VNIF), 555–575 (IFFY…RILW), and 604–624 (GTVI…LIAI). H400 is a binding site for heme a3. H402 is a binding site for Fe(II)-heme a. Residues 492 to 773 (AFGLLFFFVN…VQEYLGRLYK (282 aa)) are COX2. Residues H709, C744, C748, and H752 each coordinate Cu cation.

In the N-terminal section; belongs to the heme-copper respiratory oxidase family. This sequence in the C-terminal section; belongs to the cytochrome c oxidase subunit 2 family. In terms of assembly, component of the cytochrome c oxidase (complex IV, CIV), a multisubunit enzyme composed of a catalytic core of 3 subunits and several supernumerary subunits. The complex exists as a monomer or a dimer and forms supercomplexes (SCs) in the inner mitochondrial membrane with ubiquinol-cytochrome c oxidoreductase (cytochrome b-c1 complex, complex III, CIII). The cofactor is heme. Cu cation serves as cofactor.

It is found in the mitochondrion inner membrane. It carries out the reaction 4 Fe(II)-[cytochrome c] + O2 + 8 H(+)(in) = 4 Fe(III)-[cytochrome c] + 2 H2O + 4 H(+)(out). It functions in the pathway energy metabolism; oxidative phosphorylation. Functionally, component of the cytochrome c oxidase, the last enzyme in the mitochondrial electron transport chain which drives oxidative phosphorylation. The respiratory chain contains 3 multisubunit complexes succinate dehydrogenase (complex II, CII), ubiquinol-cytochrome c oxidoreductase (cytochrome b-c1 complex, complex III, CIII) and cytochrome c oxidase (complex IV, CIV), that cooperate to transfer electrons derived from NADH and succinate to molecular oxygen, creating an electrochemical gradient over the inner membrane that drives transmembrane transport and the ATP synthase. Cytochrome c oxidase is the component of the respiratory chain that catalyzes the reduction of oxygen to water. Electrons originating from reduced cytochrome c in the intermembrane space (IMS) are transferred via the dinuclear copper A center (CU(A)) of subunit 2 and heme A of subunit 1 to the active site in subunit 1, a binuclear center (BNC) formed by heme A3 and copper B (CU(B)). The BNC reduces molecular oxygen to 2 water molecules using 4 electrons from cytochrome c in the IMS and 4 protons from the mitochondrial matrix. This Dictyostelium citrinum (Slime mold) protein is Cytochrome c oxidase subunit 1+2 (cox1/2).